Consider the following 277-residue polypeptide: Large ribosomal subunit protein uL2 (277 aa).

Disordered stretches follow at residues 37 to 60 (KNST…GHKH) and 223 to 264 (VVMN…NKRT). Over residues 39–49 (STAGRNNNGHI) the composition is skewed to polar residues. The span at 50–60 (TTRHKGGGHKH) shows a compositional bias: basic residues. Residues 229–244 (DHPHGGGEGRTGEARE) show a composition bias toward basic and acidic residues.

It belongs to the universal ribosomal protein uL2 family. In terms of assembly, part of the 50S ribosomal subunit. Forms a bridge to the 30S subunit in the 70S ribosome.

Its function is as follows. One of the primary rRNA binding proteins. Required for association of the 30S and 50S subunits to form the 70S ribosome, for tRNA binding and peptide bond formation. It has been suggested to have peptidyltransferase activity; this is somewhat controversial. Makes several contacts with the 16S rRNA in the 70S ribosome. In Neisseria meningitidis serogroup B (strain ATCC BAA-335 / MC58), this protein is Large ribosomal subunit protein uL2.